We begin with the raw amino-acid sequence, 122 residues long: ILMDSPEDADLYHSEEIKAPEKEEFLAWQHDLEVNDKASAQARPTVFRWTGGGKEVYLSGSFNNWSKLPLTRSHNNFVAILDLPEGEHQYKFLVDGQWTHDPSEPVVTSQLGTVNNIIQVKK.

A phosphoserine mark is found at S5, S61, S66, and S73. The segment at 33 to 122 is glycogen-binding domain; the sequence is EVNDKASAQA…TVNNIIQVKK (90 aa). T113 carries the post-translational modification Phosphothreonine.

Belongs to the 5'-AMP-activated protein kinase beta subunit family. In terms of assembly, AMPK is a heterotrimer of an alpha catalytic subunit (PRKAA1 or PRKAA2), a beta (PRKAB1 or PRKAB2) and a gamma non-catalytic subunits (PRKAG1, PRKAG2 or PRKAG3). Interacts with FNIP1 and FNIP2. Post-translationally, phosphorylated when associated with the catalytic subunit (PRKAA1 or PRKAA2). Phosphorylated by ULK1; leading to negatively regulate AMPK activity and suggesting the existence of a regulatory feedback loop between ULK1 and AMPK.

Its function is as follows. Non-catalytic subunit of AMP-activated protein kinase (AMPK), an energy sensor protein kinase that plays a key role in regulating cellular energy metabolism. In response to reduction of intracellular ATP levels, AMPK activates energy-producing pathways and inhibits energy-consuming processes: inhibits protein, carbohydrate and lipid biosynthesis, as well as cell growth and proliferation. AMPK acts via direct phosphorylation of metabolic enzymes, and by longer-term effects via phosphorylation of transcription regulators. Also acts as a regulator of cellular polarity by remodeling the actin cytoskeleton; probably by indirectly activating myosin. Beta non-catalytic subunit acts as a scaffold on which the AMPK complex assembles, via its C-terminus that bridges alpha (PRKAA1 or PRKAA2) and gamma subunits (PRKAG1, PRKAG2 or PRKAG3). The polypeptide is 5'-AMP-activated protein kinase subunit beta-1 (PRKAB1) (Sus scrofa (Pig)).